Here is an 80-residue protein sequence, read N- to C-terminus: Raniseptin-5 (80 aa).

Residues 1–22 (MAFLKKSLFLVLFLGIVSLSIC) form the signal peptide. Positions 23-49 (EEEKREGEEEEKQEEENEELSEEELRE) are excised as a propeptide.

Belongs to the frog skin active peptide (FSAP) family. Dermaseptin subfamily. Expressed by the skin glands.

It is found in the secreted. Its function is as follows. Has antibacterial activity. The polypeptide is Raniseptin-5 (Boana raniceps (Chaco tree frog)).